Consider the following 257-residue polypeptide: Ribosomal RNA small subunit methyltransferase A (257 aa).

S-adenosyl-L-methionine contacts are provided by Asn12, Leu14, Gly39, Glu60, Asp85, and Asn105.

The protein belongs to the class I-like SAM-binding methyltransferase superfamily. rRNA adenine N(6)-methyltransferase family. RsmA subfamily.

Its subcellular location is the cytoplasm. The catalysed reaction is adenosine(1518)/adenosine(1519) in 16S rRNA + 4 S-adenosyl-L-methionine = N(6)-dimethyladenosine(1518)/N(6)-dimethyladenosine(1519) in 16S rRNA + 4 S-adenosyl-L-homocysteine + 4 H(+). Its function is as follows. Specifically dimethylates two adjacent adenosines (A1518 and A1519) in the loop of a conserved hairpin near the 3'-end of 16S rRNA in the 30S particle. May play a critical role in biogenesis of 30S subunits. The protein is Ribosomal RNA small subunit methyltransferase A of Methylococcus capsulatus (strain ATCC 33009 / NCIMB 11132 / Bath).